We begin with the raw amino-acid sequence, 147 residues long: Acidic phospholipase A2 beta-bungarotoxin A4 chain (147 aa).

The N-terminal stretch at methionine 1–alanine 19 is a signal peptide. Residues alanine 20–leucine 27 constitute a propeptide that is removed on maturation. Intrachain disulfides connect cysteine 54–cysteine 146, cysteine 56–cysteine 72, cysteine 71–cysteine 127, cysteine 78–cysteine 120, cysteine 88–cysteine 113, and cysteine 106–cysteine 118. Residues tyrosine 55, glycine 57, and glycine 59 each contribute to the Ca(2+) site. Histidine 75 is a catalytic residue. Position 76 (aspartate 76) interacts with Ca(2+). The active site involves aspartate 121.

This sequence belongs to the phospholipase A2 family. Group I subfamily. D49 sub-subfamily. As to quaternary structure, heterodimer; disulfide-linked. The A chains have phospholipase A2 activity and the B chains show homology with the basic protease inhibitors. The cofactor is Ca(2+). As to expression, expressed by the venom gland.

The protein resides in the secreted. It carries out the reaction a 1,2-diacyl-sn-glycero-3-phosphocholine + H2O = a 1-acyl-sn-glycero-3-phosphocholine + a fatty acid + H(+). Functionally, snake venom phospholipase A2 (PLA2) that inhibits neuromuscular transmission by blocking acetylcholine release from the nerve termini. PLA2 catalyzes the calcium-dependent hydrolysis of the 2-acyl groups in 3-sn-phosphoglycerides. This chain is Acidic phospholipase A2 beta-bungarotoxin A4 chain, found in Bungarus multicinctus (Many-banded krait).